The sequence spans 351 residues: ABC transporter nucleoside-binding protein BmpA (351 aa).

An N-terminal signal peptide occupies residues 1 to 21; the sequence is MKKRVIAVSAIALASVAVLAG. C22 carries N-palmitoyl cysteine lipidation. A lipid anchor (S-diacylglycerol cysteine) is attached at C22.

Belongs to the BMP lipoprotein family. As to quaternary structure, the complex is composed of two ATP-binding proteins (NupA), two transmembrane proteins (NupB and NupC) and a solute-binding protein (BmpA).

Its subcellular location is the cell membrane. In terms of biological role, part of an ABC transporter complex involved in the uptake of all common nucleosides. In Lactococcus lactis subsp. cremoris (strain MG1363), this protein is ABC transporter nucleoside-binding protein BmpA.